Here is a 78-residue protein sequence, read N- to C-terminus: MKNLLLTFLVVTIVCLDLGYTLICHQRHGLQTCEPAQKFCFAQTVMPFPNHPLTLMGCTYSCPTEKNAVCCSTDKCNR.

A signal peptide spans 1-21 (MKNLLLTFLVVTIVCLDLGYT). Intrachain disulfides connect C24–C40, C33–C58, C62–C70, and C71–C76.

It belongs to the three-finger toxin family. Short-chain subfamily. In terms of tissue distribution, expressed by the venom gland.

The protein localises to the secreted. This three-finger toxin binds and inhibits the nicotinic acetylcholine receptor (nAChR). The protein is Short neurotoxin OH-26 of Ophiophagus hannah (King cobra).